The sequence spans 48 residues: Acidic phospholipase A2 (48 aa).

Ca(2+) contacts are provided by Tyr-27, Gly-29, and Gly-31. The cysteines at positions 28 and 44 are disulfide-linked. His-47 is a catalytic residue. Residue Asp-48 coordinates Ca(2+).

It belongs to the phospholipase A2 family. Group II subfamily. D49 sub-subfamily. As to quaternary structure, monomer. Requires Ca(2+) as cofactor. Expressed by the venom gland.

The protein localises to the secreted. The catalysed reaction is a 1,2-diacyl-sn-glycero-3-phosphocholine + H2O = a 1-acyl-sn-glycero-3-phosphocholine + a fatty acid + H(+). Its activity is regulated as follows. Inhibited by EDTA. Inhibited by Ba(2+), Cu(+), Fe(2+) and Zn(2+) ions and, to a lesser extent, by Mn(2+) and Mg(2+) ions. Functionally, snake venom phospholipase A2 (PLA2) that shows myotoxicity and induces paw edema in mice. Exhibits indirect hemolytic activity. Inhibits platelet aggregation induced by ADP and collagen. PLA2 catalyzes the calcium-dependent hydrolysis of the 2-acyl groups in 3-sn-phosphoglycerides. The sequence is that of Acidic phospholipase A2 from Bothrops pauloensis (Neuwied's lancehead).